Reading from the N-terminus, the 95-residue chain is Aspartyl/glutamyl-tRNA(Asn/Gln) amidotransferase subunit C (95 aa).

This sequence belongs to the GatC family. In terms of assembly, heterotrimer of A, B and C subunits.

The catalysed reaction is L-glutamyl-tRNA(Gln) + L-glutamine + ATP + H2O = L-glutaminyl-tRNA(Gln) + L-glutamate + ADP + phosphate + H(+). It catalyses the reaction L-aspartyl-tRNA(Asn) + L-glutamine + ATP + H2O = L-asparaginyl-tRNA(Asn) + L-glutamate + ADP + phosphate + 2 H(+). Its function is as follows. Allows the formation of correctly charged Asn-tRNA(Asn) or Gln-tRNA(Gln) through the transamidation of misacylated Asp-tRNA(Asn) or Glu-tRNA(Gln) in organisms which lack either or both of asparaginyl-tRNA or glutaminyl-tRNA synthetases. The reaction takes place in the presence of glutamine and ATP through an activated phospho-Asp-tRNA(Asn) or phospho-Glu-tRNA(Gln). The protein is Aspartyl/glutamyl-tRNA(Asn/Gln) amidotransferase subunit C of Pelagibacter ubique (strain HTCC1062).